The sequence spans 155 residues: Ribosome maturation factor RimP (155 aa).

Belongs to the RimP family.

It localises to the cytoplasm. Functionally, required for maturation of 30S ribosomal subunits. This Staphylococcus saprophyticus subsp. saprophyticus (strain ATCC 15305 / DSM 20229 / NCIMB 8711 / NCTC 7292 / S-41) protein is Ribosome maturation factor RimP.